The primary structure comprises 398 residues: Phosphoglycerate kinase (398 aa).

Substrate is bound by residues 20–22 (DLN), Arg35, 58–61 (HLGR), Arg118, and Arg155. Residues Lys206, Gly295, Glu326, and 354–357 (GGDS) each bind ATP.

The protein belongs to the phosphoglycerate kinase family. In terms of assembly, monomer.

The protein localises to the cytoplasm. The enzyme catalyses (2R)-3-phosphoglycerate + ATP = (2R)-3-phospho-glyceroyl phosphate + ADP. The protein operates within carbohydrate degradation; glycolysis; pyruvate from D-glyceraldehyde 3-phosphate: step 2/5. This chain is Phosphoglycerate kinase, found in Onion yellows phytoplasma (strain OY-M).